We begin with the raw amino-acid sequence, 40 residues long: Large ribosomal subunit protein bL36A (40 aa).

Belongs to the bacterial ribosomal protein bL36 family.

The sequence is that of Large ribosomal subunit protein bL36A from Kineococcus radiotolerans (strain ATCC BAA-149 / DSM 14245 / SRS30216).